A 213-amino-acid chain; its full sequence is Nicolin-1 (213 aa).

Part of the neuronal tubulin polyglutamylase complex which contains TPGS1, TPGS2, TTLL1, LRRC49 and NICN1. High expression level is found in brain, testis, liver and kidney. Weak expression in spleen, leukocytes, small intestin and colon.

Its subcellular location is the nucleus. This Mus musculus (Mouse) protein is Nicolin-1 (Nicn1).